Consider the following 327-residue polypeptide: MEAIKGSDVNVPDAVFAWLLDGRGGVKPLEDNDVIDSQHPCWLHLNYTHPDSARWLASTPLLPNNVRDALAGESSRPRVSRMGEGTLITLRCINGSTDERPDQLVAMRLYMDERFIVSTRQRKVLALDDVVSDLQEGTGPVDCGGWLVDVCDALTDHASEFIEELHDKIIDLEDNLLDQQIPPRGFLALLRKQLIVMRRYMAPQRDVYARLASERLPWMSDDHRRRMQDIADRLGRGLDEIDACIARTGIMADEIAQVMQESLARRTYTMSLMAMVFLPSTFLTGLFGVNLGGIPGGGWRFGFSLFCILLVVLIGGVTLWLHRSKWL.

The Cytoplasmic portion of the chain corresponds to 1–273 (MEAIKGSDVN…ARRTYTMSLM (273 aa)). A helical membrane pass occupies residues 274-294 (AMVFLPSTFLTGLFGVNLGGI). At 295-300 (PGGGWR) the chain is on the periplasmic side. The helical transmembrane segment at 301-321 (FGFSLFCILLVVLIGGVTLWL) threads the bilayer. Topologically, residues 322-327 (HRSKWL) are cytoplasmic.

Belongs to the CorA metal ion transporter (MIT) (TC 1.A.35) family.

Its subcellular location is the cell inner membrane. The catalysed reaction is Zn(2+)(out) + H(+)(out) = Zn(2+)(in) + H(+)(in). Zinc transporter. Acts as a Zn(2+):proton symporter, which likely mediates zinc ion uptake. The polypeptide is Zinc transport protein ZntB (Salmonella agona (strain SL483)).